The chain runs to 336 residues: Phospho-N-acetylmuramoyl-pentapeptide-transferase (336 aa).

A run of 10 helical transmembrane segments spans residues Leu3 to Ile23, Gly53 to Ile73, Ser78 to Leu98, Leu118 to Ile138, Val143 to Val163, Gly174 to Ala194, Phe200 to Asn220, Val226 to Ala246, Trp251 to Val271, and Ala316 to Phe336.

The protein belongs to the glycosyltransferase 4 family. MraY subfamily. Requires Mg(2+) as cofactor.

Its subcellular location is the cell membrane. It catalyses the reaction UDP-N-acetyl-alpha-D-muramoyl-L-alanyl-gamma-D-glutamyl-L-lysyl-D-alanyl-D-alanine + di-trans,octa-cis-undecaprenyl phosphate = Mur2Ac(oyl-L-Ala-gamma-D-Glu-L-Lys-D-Ala-D-Ala)-di-trans,octa-cis-undecaprenyl diphosphate + UMP. It participates in cell wall biogenesis; peptidoglycan biosynthesis. Its function is as follows. Catalyzes the initial step of the lipid cycle reactions in the biosynthesis of the cell wall peptidoglycan: transfers peptidoglycan precursor phospho-MurNAc-pentapeptide from UDP-MurNAc-pentapeptide onto the lipid carrier undecaprenyl phosphate, yielding undecaprenyl-pyrophosphoryl-MurNAc-pentapeptide, known as lipid I. This Streptococcus pyogenes serotype M4 (strain MGAS10750) protein is Phospho-N-acetylmuramoyl-pentapeptide-transferase.